A 691-amino-acid chain; its full sequence is Elongation factor G (691 aa).

Residues 8–282 (NKTRNIGIMA…AVVEFLPAPV (275 aa)) enclose the tr-type G domain. GTP is bound by residues 17 to 24 (AHIDAGKT), 81 to 85 (DTPGH), and 135 to 138 (NKMD).

The protein belongs to the TRAFAC class translation factor GTPase superfamily. Classic translation factor GTPase family. EF-G/EF-2 subfamily.

The protein localises to the cytoplasm. In terms of biological role, catalyzes the GTP-dependent ribosomal translocation step during translation elongation. During this step, the ribosome changes from the pre-translocational (PRE) to the post-translocational (POST) state as the newly formed A-site-bound peptidyl-tRNA and P-site-bound deacylated tRNA move to the P and E sites, respectively. Catalyzes the coordinated movement of the two tRNA molecules, the mRNA and conformational changes in the ribosome. The chain is Elongation factor G from Heliobacterium modesticaldum (strain ATCC 51547 / Ice1).